The chain runs to 383 residues: Deoxyguanosinetriphosphate triphosphohydrolase-like protein (383 aa).

Positions 62 to 198 (RLTHSLEVST…ASLADDISYI (137 aa)) constitute an HD domain.

This sequence belongs to the dGTPase family. Type 2 subfamily.

The polypeptide is Deoxyguanosinetriphosphate triphosphohydrolase-like protein (Rickettsia prowazekii (strain Madrid E)).